Consider the following 79-residue polypeptide: Sec-independent protein translocase protein TatA (79 aa).

Residues 1–21 (MGGISIWQLLIIALIVVLLFG) traverse the membrane as a helical segment. The disordered stretch occupies residues 43–79 (MSSEEDKKALEDTEAAKTAQTTQQATEKKPESNKEQA). A compositionally biased stretch (basic and acidic residues) spans 46 to 57 (EEDKKALEDTEA). Residues 58–67 (AKTAQTTQQA) are compositionally biased toward low complexity. Over residues 68 to 79 (TEKKPESNKEQA) the composition is skewed to basic and acidic residues.

The protein belongs to the TatA/E family. In terms of assembly, the Tat system comprises two distinct complexes: a TatABC complex, containing multiple copies of TatA, TatB and TatC subunits, and a separate TatA complex, containing only TatA subunits. Substrates initially bind to the TatABC complex, which probably triggers association of the separate TatA complex to form the active translocon.

It localises to the cell inner membrane. Part of the twin-arginine translocation (Tat) system that transports large folded proteins containing a characteristic twin-arginine motif in their signal peptide across membranes. TatA could form the protein-conducting channel of the Tat system. The protein is Sec-independent protein translocase protein TatA of Shewanella putrefaciens (strain CN-32 / ATCC BAA-453).